Consider the following 567-residue polypeptide: Proline--tRNA ligase (567 aa).

The protein belongs to the class-II aminoacyl-tRNA synthetase family. ProS type 1 subfamily. In terms of assembly, homodimer.

Its subcellular location is the cytoplasm. The catalysed reaction is tRNA(Pro) + L-proline + ATP = L-prolyl-tRNA(Pro) + AMP + diphosphate. Functionally, catalyzes the attachment of proline to tRNA(Pro) in a two-step reaction: proline is first activated by ATP to form Pro-AMP and then transferred to the acceptor end of tRNA(Pro). As ProRS can inadvertently accommodate and process non-cognate amino acids such as alanine and cysteine, to avoid such errors it has two additional distinct editing activities against alanine. One activity is designated as 'pretransfer' editing and involves the tRNA(Pro)-independent hydrolysis of activated Ala-AMP. The other activity is designated 'posttransfer' editing and involves deacylation of mischarged Ala-tRNA(Pro). The misacylated Cys-tRNA(Pro) is not edited by ProRS. In Fusobacterium nucleatum subsp. nucleatum (strain ATCC 25586 / DSM 15643 / BCRC 10681 / CIP 101130 / JCM 8532 / KCTC 2640 / LMG 13131 / VPI 4355), this protein is Proline--tRNA ligase.